The sequence spans 144 residues: uncharacterized protein (144 aa).

A signal peptide spans 1 to 22 (MCTDVAFFSLDCLATWLGGVCS).

This is an uncharacterized protein from Saccharomyces cerevisiae (strain ATCC 204508 / S288c) (Baker's yeast).